Reading from the N-terminus, the 316-residue chain is MSGDTCLCPASGAKPKISGFKGGGLGNKYVQLNVGGSLYYTTVRALTRHDTMLKAMFSGRMEVLTDKEGWILIDRCGKHFGTILNYLRDDTITLPQSRQEIQELMAEAKYYLIQGLVSTCQTALQDKKDSYQPVCNIPIITSLREEDRLIESSTKPVVKLLYNRSNNKYSYTSNSDDHLLKNIELFDKLSLRFNGRVLFIKDVIGDEICCWSFYGQGRKLAEVCCTSIVYATEKKQTKVEFPEARIYEETLNVLLYETPRVPDNSLLEATSRSRSQASPSEDEDTFELRDRVRRIHVKRYSTYDDRQLGHQSTHRD.

Residues 28–96 (KYVQLNVGGS…LRDDTITLPQ (69 aa)) enclose the BTB domain. Residues 268-279 (EATSRSRSQASP) are compositionally biased toward polar residues. Residues 268 to 288 (EATSRSRSQASPSEDEDTFEL) are disordered. The residue at position 278 (Ser278) is a Phosphoserine. At Ser280 the chain carries Phosphoserine; by CK2.

This sequence belongs to the BACURD family. In terms of assembly, component of the BCR(TNFAIP1) E3 ubiquitin ligase complex, at least composed of CUL3, TNFAIP1/BACURD2 and RBX1. Interacts with RHOA; with a preference for RhoA-GDP. Interacts with RHOB. Interacts with PCNA. Interacts with CSNK2B. Phosphorylation at Ser-280 by CK2 facilitates the nucleus localization and increases interaction with PCNA.

The protein resides in the cytoplasm. The protein localises to the nucleus. It is found in the endosome. It participates in protein modification; protein ubiquitination. Functionally, substrate-specific adapter of a BCR (BTB-CUL3-RBX1) E3 ubiquitin-protein ligase complex involved in regulation of cytoskeleton structure. The BCR(TNFAIP1) E3 ubiquitin ligase complex mediates the ubiquitination of RHOA, leading to its degradation by the proteasome, thereby regulating the actin cytoskeleton and cell migration. Its interaction with RHOB may regulate apoptosis. May enhance the PCNA-dependent DNA polymerase delta activity. The polypeptide is BTB/POZ domain-containing adapter for CUL3-mediated RhoA degradation protein 2 (Tnfaip1) (Mus musculus (Mouse)).